Consider the following 544-residue polypeptide: Methionine--tRNA ligase 1 (544 aa).

Residues 10–20 (PYANGSLHLGH) carry the 'HIGH' region motif. Residues Cys-141, Cys-144, Cys-153, and Cys-156 each coordinate Zn(2+). The 'KMSKS' region motif lies at 329–333 (KLSTS). Thr-332 is a binding site for ATP.

It belongs to the class-I aminoacyl-tRNA synthetase family. MetG type 1 subfamily. In terms of assembly, monomer. Requires Zn(2+) as cofactor.

It localises to the cytoplasm. It carries out the reaction tRNA(Met) + L-methionine + ATP = L-methionyl-tRNA(Met) + AMP + diphosphate. Functionally, is required not only for elongation of protein synthesis but also for the initiation of all mRNA translation through initiator tRNA(fMet) aminoacylation. This Bacillus cereus (strain ATCC 10987 / NRS 248) protein is Methionine--tRNA ligase 1.